A 199-amino-acid polypeptide reads, in one-letter code: MALPALVAAAAPAVIGGIASYFGQQETNAANAKLAVWQTRENQAEAARNRKWQEQMSNSAHQREANDLQTAGLNRLLTATGGASTPSGGQGQAAGATMENSLKAGITTAFEAKQLGMQIERQEKELQNLAAQTRKLNIDAKVAEKRIPESDLKTKFTTNFSPVIDRVINLEDSNGPRLSNLREEKKPNQMPLKNGKLNT.

Residues 171-199 (EDSNGPRLSNLREEKKPNQMPLKNGKLNT) are disordered.

It belongs to the microviridae H protein family.

The protein localises to the virion. Probably triggers with protein G the injection of the phage DNA into the host upon conformational changes induced by virus-host receptor interaction. In Bdellovibrio bacteriovorus (Bacteriophage phiMH2K), this protein is Minor spike protein H.